Consider the following 42-residue polypeptide: Photosystem I reaction center subunit IX (42 aa).

Residues tyrosine 7–isoleucine 27 traverse the membrane as a helical segment.

This sequence belongs to the PsaJ family.

The protein resides in the plastid. It localises to the chloroplast thylakoid membrane. Functionally, may help in the organization of the PsaE and PsaF subunits. In Platanus occidentalis (Sycamore), this protein is Photosystem I reaction center subunit IX.